We begin with the raw amino-acid sequence, 1444 residues long: Probable chitinase LysM18 (1444 aa).

2 LysM domains span residues Ser-256–Cys-302 and Thr-321–Leu-369. The Chitin-binding type-1 domain maps to Asn-382–Thr-450. 4 cysteine pairs are disulfide-bonded: Cys-385–Cys-413, Cys-407–Cys-419, Cys-412–Cys-426, and Cys-444–Cys-448. Residues Tyr-461–Asp-831 form the GH18 domain. The active-site Proton donor is the Glu-582. Chitin-binding residues include Tyr-583 and Trp-808.

Belongs to the glycosyl hydrolase 18 family. Chitinase class V subfamily.

It catalyses the reaction Random endo-hydrolysis of N-acetyl-beta-D-glucosaminide (1-&gt;4)-beta-linkages in chitin and chitodextrins.. Functionally, probable chitinase involved in the degradation of chitin, a component of the cell walls of fungi and exoskeletal elements of some animals (including worms and arthropods). Might be involved in manipulation of host defenses for successful infection. The sequence is that of Probable chitinase LysM18 from Penicillium expansum (Blue mold rot fungus).